A 323-amino-acid chain; its full sequence is Fos-related antigen 2 (323 aa).

A compositionally biased stretch (low complexity) spans 1 to 27; that stretch reads MYQDYPGSFDTSSRGSSGSPGHPEPYS. The interval 1–31 is disordered; it reads MYQDYPGSFDTSSRGSSGSPGHPEPYSAGAA. The bZIP domain occupies 124 to 187; the sequence is EEKRRIRRER…EKLEFMLVAH (64 aa). The basic motif stretch occupies residues 126–128; that stretch reads KRR. The segment at 129 to 136 is leucine-zipper; sequence IRRERNKL. 2 disordered regions span residues 194–214 and 288–323; these read SPEE…TGAS and ESPL…LLAL. Low complexity predominate over residues 305–317; the sequence is SSSGDQSSDSLNS.

It belongs to the bZIP family. Fos subfamily. In terms of assembly, heterodimer with JUN.

Its subcellular location is the nucleus. The chain is Fos-related antigen 2 (FOSL2) from Gallus gallus (Chicken).